A 192-amino-acid chain; its full sequence is 7-methyl-GTP pyrophosphatase (192 aa).

The active-site Proton acceptor is Asp-69.

This sequence belongs to the Maf family. YceF subfamily. Requires a divalent metal cation as cofactor.

It localises to the cytoplasm. It carries out the reaction N(7)-methyl-GTP + H2O = N(7)-methyl-GMP + diphosphate + H(+). Its function is as follows. Nucleoside triphosphate pyrophosphatase that hydrolyzes 7-methyl-GTP (m(7)GTP). May have a dual role in cell division arrest and in preventing the incorporation of modified nucleotides into cellular nucleic acids. The polypeptide is 7-methyl-GTP pyrophosphatase (Pseudomonas fluorescens (strain ATCC BAA-477 / NRRL B-23932 / Pf-5)).